The primary structure comprises 117 residues: MLLEKAYRIKKNADFQRIYKKGHSVANRQFVVYTCNNKEIDHFRLGISVSKKLGNAVLRNKIKRAIRENFKVHKSHILAKDIIVIARQPAKDMTTLQIQNSLEHVLKIAKVFNKKSK.

It belongs to the RnpA family. In terms of assembly, consists of a catalytic RNA component (M1 or rnpB) and a protein subunit.

The catalysed reaction is Endonucleolytic cleavage of RNA, removing 5'-extranucleotides from tRNA precursor.. Its function is as follows. RNaseP catalyzes the removal of the 5'-leader sequence from pre-tRNA to produce the mature 5'-terminus. It can also cleave other RNA substrates such as 4.5S RNA. The protein component plays an auxiliary but essential role in vivo by binding to the 5'-leader sequence and broadening the substrate specificity of the ribozyme. This Staphylococcus aureus (strain bovine RF122 / ET3-1) protein is Ribonuclease P protein component.